A 625-amino-acid chain; its full sequence is tRNA uridine 5-carboxymethylaminomethyl modification enzyme MnmG (625 aa).

FAD is bound at residue 11-16 (GAGHAG). 271–285 (GPRYCPSIETKIVTF) serves as a coordination point for NAD(+).

This sequence belongs to the MnmG family. As to quaternary structure, homodimer. Heterotetramer of two MnmE and two MnmG subunits. Requires FAD as cofactor.

Its subcellular location is the cytoplasm. Functionally, NAD-binding protein involved in the addition of a carboxymethylaminomethyl (cmnm) group at the wobble position (U34) of certain tRNAs, forming tRNA-cmnm(5)s(2)U34. This Parabacteroides distasonis (strain ATCC 8503 / DSM 20701 / CIP 104284 / JCM 5825 / NCTC 11152) protein is tRNA uridine 5-carboxymethylaminomethyl modification enzyme MnmG.